We begin with the raw amino-acid sequence, 1684 residues long: GRIP and coiled-coil domain-containing protein 2 (1684 aa).

At methionine 1 the chain carries N-acetylmethionine. The segment at 1-22 (MEDLVQDGVASPATPGTGKSKL) is disordered. Residue serine 11 is modified to Phosphoserine. Threonine 14 bears the Phosphothreonine mark. A coiled-coil region spans residues 110-1618 (VTKMGDAHKE…REKSAANLEY (1509 aa)). Residues serine 236, serine 1483, and serine 1487 each carry the phosphoserine modification. A disordered region spans residues 1475–1502 (LKNEPTTRSPVSSQQSLKNLRERRNTDL). Polar residues predominate over residues 1477-1492 (NEPTTRSPVSSQQSLK). Residues 1574–1613 (HLNGLLRETEATNAILMEQIKLLKSEIRRLERNQEREKSA) form a mediates interaction with RAB6A region. The interval 1574 to 1684 (HLNGLLRETE…SYLHSWSGLR (111 aa)) is mediates interaction with RAB9A. A GRIP domain is found at 1609–1659 (REKSAANLEYLKNVLLQFIFLKPGSERERLLPVINTMLQLSPEEKGKLAAV).

As to quaternary structure, homodimer. Interacts (via GRIP domain) with RAB6A (preferentially in its GTP-bound form). May interact (RAB6A-dependent) with ARL1; according to PubMed:19703403, RAB6A and ARL1 are not involved in GCC2 Golgi localization as proposed by PubMed:18243103. Interacts (probably via GRIP domain) with RAB9A (preferentially in its GTP-bound form). Interacts with CLASP1 and CLASP2; recruits both proteins to membranes of the TGN. Interacts with STX16. Ubiquitous.

The protein localises to the cytoplasm. Its subcellular location is the golgi apparatus. The protein resides in the trans-Golgi network membrane. Functionally, golgin which probably tethers transport vesicles to the trans-Golgi network (TGN) and regulates vesicular transport between the endosomes and the Golgi. As a RAB9A effector it is involved in recycling of the mannose 6-phosphate receptor from the late endosomes to the TGN. May also play a role in transport between the recycling endosomes and the Golgi. Required for maintenance of the Golgi structure, it is involved in the biogenesis of noncentrosomal, Golgi-associated microtubules through recruitment of CLASP1 and CLASP2. This chain is GRIP and coiled-coil domain-containing protein 2 (GCC2), found in Homo sapiens (Human).